We begin with the raw amino-acid sequence, 422 residues long: Glycine amidinotransferase, mitochondrial (422 aa).

Catalysis depends on residues Asp253 and His302. The Amidino-cysteine intermediate role is filled by Cys406.

It belongs to the amidinotransferase family. Homodimer. Strongly expressed in neurons and glia of the brain, the lamina propria, submucosa and serosa of the small intestine, in oocytes and on the fringes of the pancreas. Not expressed in the retina, eye lens, heart or bulbus arteriosus. Expressed in the yolk syncytial layer in gastrula stage embryos, in the yolk syncytial layer and mature somites in early segmentation embryos and in the yolk syncytial layer and the liver of long-pec stage (48 hours post-fertilization) embryos.

The protein localises to the mitochondrion inner membrane. The catalysed reaction is L-arginine + glycine = guanidinoacetate + L-ornithine. The protein operates within amine and polyamine biosynthesis; creatine biosynthesis; creatine from L-arginine and glycine: step 1/2. Functionally, catalyzes the biosynthesis of guanidinoacetate, the immediate precursor of creatine. Creatine plays a vital role in energy metabolism in muscle tissues. May play a role in embryonic and central nervous system development. The sequence is that of Glycine amidinotransferase, mitochondrial from Danio rerio (Zebrafish).